A 385-amino-acid chain; its full sequence is MDSRARSSSREAHGRSSRSSSRDDKKAKAGRGSRGRARPDAGAERQSTGRTATRGEPRAPAATATVVDVDEVRGPGEEGTEVVALLESERPEEGIKPSGLGACEWLLVLASLIFIIMTFPFSIWFCIKVVQEYERVIIFRLGHLLPGRAKGPGLFFFLPCLDTYHKVDLRLQTLEIPFHEVVTKDMFIMEIDAVCYYRMENASLLLSSLAHVSKAIQFLVQTTMKRLLAHRSLTEILLERKSIAQDVKVALDAVTCIWGIKVERTEIKDVRLPAGLQHSLAVEAEAQRQAKVRVIAAEGEKAASESLRMAAEILSGTPAAVQLRYLHTLQSLSTEKPATVVLPLPFDMLSLLSSPGNRAQGSINYPSSSKPVEPLNPKKKDSPML.

The span at 1 to 27 (MDSRARSSSREAHGRSSRSSSRDDKKA) shows a compositional bias: basic and acidic residues. The segment at 1 to 64 (MDSRARSSSR…GEPRAPAATA (64 aa)) is disordered. Over 1 to 104 (MDSRARSSSR…IKPSGLGACE (104 aa)) the chain is Cytoplasmic. Residue cysteine 103 is the site of S-palmitoyl cysteine attachment. Residues 105-125 (WLLVLASLIFIIMTFPFSIWF) traverse the membrane as a helical segment. Residues 126 to 385 (CIKVVQEYER…NPKKKDSPML (260 aa)) lie on the Extracellular side of the membrane. Residues 357–370 (NRAQGSINYPSSSK) are compositionally biased toward polar residues. A disordered region spans residues 357 to 385 (NRAQGSINYPSSSKPVEPLNPKKKDSPML). A compositionally biased stretch (basic and acidic residues) spans 376-385 (NPKKKDSPML).

This sequence belongs to the band 7/mec-2 family. In terms of assembly, interacts with nephrin/NPHS1, KIRRL1 and CD2AP. Interacts with DDN.

The protein localises to the membrane. Its function is as follows. Plays a role in the regulation of glomerular permeability, acting probably as a linker between the plasma membrane and the cytoskeleton. This is Podocin (Nphs2) from Mus musculus (Mouse).